We begin with the raw amino-acid sequence, 471 residues long: BPI fold-containing family B member 1 (471 aa).

A signal peptide spans 1 to 18; the sequence is MTNPWIVSLLLGATLVQA. Residues asparagine 150, asparagine 157, asparagine 260, and asparagine 397 are each glycosylated (N-linked (GlcNAc...) asparagine). Cysteine 154 and cysteine 197 are oxidised to a cystine.

This sequence belongs to the BPI/LBP/Plunc superfamily. Plunc family.

Its subcellular location is the secreted. Its function is as follows. May play a role in innate immunity in mouth, nose and lungs. Binds bacterial lipopolysaccharide (LPS) and modulates the cellular responses to LPS. The protein is BPI fold-containing family B member 1 (Bpifb1) of Rattus norvegicus (Rat).